A 267-amino-acid polypeptide reads, in one-letter code: Putative hydro-lyase RALTA_B1245 (267 aa).

The protein belongs to the D-glutamate cyclase family.

This chain is Putative hydro-lyase RALTA_B1245, found in Cupriavidus taiwanensis (strain DSM 17343 / BCRC 17206 / CCUG 44338 / CIP 107171 / LMG 19424 / R1) (Ralstonia taiwanensis (strain LMG 19424)).